Here is a 298-residue protein sequence, read N- to C-terminus: MNNLQTQFPHIAIKLNEPLSKYTYTKTGGAADVFVMPKTIEETQEVVAYCHQNKIPLTILGNGSNLIIKDGGIRGVILHLDLLQTIERNNTQIIAMSGAKLIDTAKFALDESLSGLEFACGIPGSIGGALHMNAGAYGGEISDVLEAATVLTQTGELKKLKRSELKAAYRFSTIAEKNYIVLDATFSLALEEKNLIQAKMDELTAAREAKQPLEYPSCGSVFKRPPGHFAGKLIQDSGLQGHIIGGAQVSLKHAGFIVNIGGATATDYMNLIAYVQQTVREKFDVELETEVKIIGEDK.

Positions 26-191 (KTGGAADVFV…LDATFSLALE (166 aa)) constitute an FAD-binding PCMH-type domain. Residue R170 is part of the active site. Catalysis depends on S220, which acts as the Proton donor. Residue E290 is part of the active site.

It belongs to the MurB family. The cofactor is FAD.

It localises to the cytoplasm. The catalysed reaction is UDP-N-acetyl-alpha-D-muramate + NADP(+) = UDP-N-acetyl-3-O-(1-carboxyvinyl)-alpha-D-glucosamine + NADPH + H(+). It functions in the pathway cell wall biogenesis; peptidoglycan biosynthesis. Cell wall formation. The polypeptide is UDP-N-acetylenolpyruvoylglucosamine reductase (Listeria monocytogenes serotype 4b (strain CLIP80459)).